A 69-amino-acid chain; its full sequence is Cytochrome c oxidase subunit 8A, mitochondrial (69 aa).

A mitochondrion-targeting transit peptide spans Met1–Lys25. Residues Ser2 to Leu19 carry the SIFI-degron motif. At Ile26–Gly36 the chain is on the mitochondrial matrix side. A helical transmembrane segment spans residues Ile37–Ser60. Topologically, residues His61 to Glu69 are mitochondrial intermembrane.

It belongs to the cytochrome c oxidase VIII family. As to quaternary structure, component of the cytochrome c oxidase (complex IV, CIV), a multisubunit enzyme composed of 14 subunits. The complex is composed of a catalytic core of 3 subunits MT-CO1, MT-CO2 and MT-CO3, encoded in the mitochondrial DNA, and 11 supernumerary subunits COX4I, COX5A, COX5B, COX6A, COX6B, COX6C, COX7A, COX7B, COX7C, COX8 and NDUFA4, which are encoded in the nuclear genome. The complex exists as a monomer or a dimer and forms supercomplexes (SCs) in the inner mitochondrial membrane with NADH-ubiquinone oxidoreductase (complex I, CI) and ubiquinol-cytochrome c oxidoreductase (cytochrome b-c1 complex, complex III, CIII), resulting in different assemblies (supercomplex SCI(1)III(2)IV(1) and megacomplex MCI(2)III(2)IV(2)). In terms of processing, in response to mitochondrial stress, the precursor protein is ubiquitinated by the SIFI complex in the cytoplasm before mitochondrial import, leading to its degradation. Within the SIFI complex, UBR4 initiates ubiquitin chain that are further elongated or branched by KCMF1.

It localises to the mitochondrion inner membrane. It functions in the pathway energy metabolism; oxidative phosphorylation. Functionally, component of the cytochrome c oxidase, the last enzyme in the mitochondrial electron transport chain which drives oxidative phosphorylation. The respiratory chain contains 3 multisubunit complexes succinate dehydrogenase (complex II, CII), ubiquinol-cytochrome c oxidoreductase (cytochrome b-c1 complex, complex III, CIII) and cytochrome c oxidase (complex IV, CIV), that cooperate to transfer electrons derived from NADH and succinate to molecular oxygen, creating an electrochemical gradient over the inner membrane that drives transmembrane transport and the ATP synthase. Cytochrome c oxidase is the component of the respiratory chain that catalyzes the reduction of oxygen to water. Electrons originating from reduced cytochrome c in the intermembrane space (IMS) are transferred via the dinuclear copper A center (CU(A)) of subunit 2 and heme A of subunit 1 to the active site in subunit 1, a binuclear center (BNC) formed by heme A3 and copper B (CU(B)). The BNC reduces molecular oxygen to 2 water molecules using 4 electrons from cytochrome c in the IMS and 4 protons from the mitochondrial matrix. This is Cytochrome c oxidase subunit 8A, mitochondrial (COX8A) from Gorilla gorilla gorilla (Western lowland gorilla).